Consider the following 161-residue polypeptide: RNA pyrophosphohydrolase (161 aa).

The region spanning K7–E149 is the Nudix hydrolase domain. The Nudix box signature appears at G40–G61.

It belongs to the Nudix hydrolase family. RppH subfamily. A divalent metal cation serves as cofactor.

Its function is as follows. Accelerates the degradation of transcripts by removing pyrophosphate from the 5'-end of triphosphorylated RNA, leading to a more labile monophosphorylated state that can stimulate subsequent ribonuclease cleavage. The sequence is that of RNA pyrophosphohydrolase from Wolbachia sp. subsp. Brugia malayi (strain TRS).